The sequence spans 75 residues: uncharacterized protein (75 aa).

The next 2 membrane-spanning stretches (helical) occupy residues 7 to 26 and 36 to 58; these read LINA…AASA and MHLF…FCPV.

The protein resides in the cell membrane. This is an uncharacterized protein from Bacillus subtilis (strain 168).